Here is a 115-residue protein sequence, read N- to C-terminus: Translation initiation factor 1A 2 (115 aa).

The segment at 1 to 34 is disordered; that stretch reads MANYRSTIRHRNSGSRKSVSGDTHEVTRVRTPQK. A compositionally biased stretch (basic and acidic residues) spans 22–34; it reads DTHEVTRVRTPQK. Positions 27–101 constitute an S1-like domain; the sequence is TRVRTPQKDR…SKADVTWKYT (75 aa).

This sequence belongs to the eIF-1A family.

Seems to be required for maximal rate of protein biosynthesis. Enhances ribosome dissociation into subunits and stabilizes the binding of the initiator Met-tRNA(I) to 40 S ribosomal subunits. The chain is Translation initiation factor 1A 2 from Methanosarcina barkeri (strain Fusaro / DSM 804).